The chain runs to 807 residues: Microbial collagenase (807 aa).

Positions 1-27 (MSHLLPFPRRRLALACLLASISGASFG) are cleaved as a signal peptide. His434 lines the Zn(2+) pocket. Glu435 is a catalytic residue. A Zn(2+)-binding site is contributed by His438. The segment at 562 to 585 (EVTPENPDTDPDTPTEPSDGVTQL) is disordered.

Belongs to the peptidase M9A family. Zn(2+) serves as cofactor.

It localises to the secreted. It carries out the reaction Digestion of native collagen in the triple helical region at Xaa-|-Gly bonds. With synthetic peptides, a preference is shown for Gly at P3 and P1', Pro and Ala at P2 and P2', and hydroxyproline, Ala or Arg at P3'.. Functionally, possesses gelatinolytic activity. The chain is Microbial collagenase from Vibrio vulnificus (strain CMCP6).